We begin with the raw amino-acid sequence, 127 residues long: MATASRKKKKVKVTPEGTVHIKASFNNVMVTITDTLGNTVSWSSAGKNGFKGSKKNTPYASQVTSEAAAKEAYDLGMRYVDVLIKGPGSGRDAAIRALQGVGLEVRSIRDITPLPHNGCRPPKRRRV.

This sequence belongs to the universal ribosomal protein uS11 family. As to quaternary structure, part of the 30S ribosomal subunit. Interacts with proteins S7 and S18. Binds to IF-3.

Its function is as follows. Located on the platform of the 30S subunit, it bridges several disparate RNA helices of the 16S rRNA. Forms part of the Shine-Dalgarno cleft in the 70S ribosome. The protein is Small ribosomal subunit protein uS11 of Chlorobaculum tepidum (strain ATCC 49652 / DSM 12025 / NBRC 103806 / TLS) (Chlorobium tepidum).